The chain runs to 392 residues: Sterol methyltransferase-like 3 (392 aa).

Residues 20–42 (VTPWQAAAGVTAAIFIGSYLWHS) form a helical membrane-spanning segment.

The protein belongs to the class I-like SAM-binding methyltransferase superfamily. Erg6/SMT family.

The protein localises to the microsome membrane. Unable to convert squalene, botryococcene, cycloartenol, zymosterol or lanosterol to mono-, di-, tri- or tetramethylated derivatives. This is Sterol methyltransferase-like 3 (SMT-3) from Botryococcus braunii (Green alga).